The chain runs to 671 residues: Gametogenetin-binding protein 2-like (671 aa).

2 disordered regions span residues 372–489 (REQK…ARVQ) and 532–562 (VRDS…SEVS). Positions 373–384 (EQKKLKKKKKKD) are enriched in basic residues. Positions 385-395 (EKKNLLHRQCD) are enriched in basic and acidic residues. Residues 396–420 (DTEANESDEEEEELRNEELDLEEES) are compositionally biased toward acidic residues. The span at 455-472 (TKSKPKKQSKKKKQKKAA) shows a compositional bias: basic residues. Polar residues-rich tracts occupy residues 476 to 486 (MGNQKQMQATA) and 546 to 557 (GSRTSSAISSPE).

The protein is Gametogenetin-binding protein 2-like of Drosophila melanogaster (Fruit fly).